The chain runs to 177 residues: MLKDLYKTQIVPSLQNKLGYSNVMQVPKIVKVCLNMGLGIRGSDSKVMNSCVRDLALIAGQKPVATSVKKSIAGFKIRKGFPIGCKVTLRNNKMYEFLERLIYVVLPREQDFKGLSINQFDGCGNISIGIKEHISFLEVDYDKIDKILGLDINIVTNAVNNKDAKLLLMEFGLPFIN.

Belongs to the universal ribosomal protein uL5 family. Part of the 50S ribosomal subunit; part of the 5S rRNA/L5/L18/L25 subcomplex. Contacts the 5S rRNA and the P site tRNA. Forms a bridge to the 30S subunit in the 70S ribosome.

In terms of biological role, this is one of the proteins that bind and probably mediate the attachment of the 5S RNA into the large ribosomal subunit, where it forms part of the central protuberance. In the 70S ribosome it contacts protein S13 of the 30S subunit (bridge B1b), connecting the 2 subunits; this bridge is implicated in subunit movement. Contacts the P site tRNA; the 5S rRNA and some of its associated proteins might help stabilize positioning of ribosome-bound tRNAs. In Ehrlichia ruminantium (strain Welgevonden), this protein is Large ribosomal subunit protein uL5.